The chain runs to 471 residues: Sulfate adenylyltransferase subunit 1 (471 aa).

Positions 22-239 (KDMLRFLTCG…NIEIGEDDNL (218 aa)) constitute a tr-type G domain. The interval 31–38 (GSVDDGKS) is G1. Position 31-38 (31-38 (GSVDDGKS)) interacts with GTP. Residues 89–93 (GITID) are G2. Positions 110–113 (DTPG) are G3. GTP-binding positions include 110–114 (DTPGH) and 165–168 (NKMD). The tract at residues 165–168 (NKMD) is G4. Residues 202 to 204 (SAL) are G5.

The protein belongs to the TRAFAC class translation factor GTPase superfamily. Classic translation factor GTPase family. CysN/NodQ subfamily. As to quaternary structure, heterodimer composed of CysD, the smaller subunit, and CysN.

The catalysed reaction is sulfate + ATP + H(+) = adenosine 5'-phosphosulfate + diphosphate. It functions in the pathway sulfur metabolism; hydrogen sulfide biosynthesis; sulfite from sulfate: step 1/3. Its function is as follows. With CysD forms the ATP sulfurylase (ATPS) that catalyzes the adenylation of sulfate producing adenosine 5'-phosphosulfate (APS) and diphosphate, the first enzymatic step in sulfur assimilation pathway. APS synthesis involves the formation of a high-energy phosphoric-sulfuric acid anhydride bond driven by GTP hydrolysis by CysN coupled to ATP hydrolysis by CysD. This chain is Sulfate adenylyltransferase subunit 1, found in Alteromonas mediterranea (strain DSM 17117 / CIP 110805 / LMG 28347 / Deep ecotype).